A 306-amino-acid polypeptide reads, in one-letter code: MDLGSLISETRNPDTLDLDNLSTLDMVTKLNQQDTTVAGAVSRTLPQVAEAVDSAAATLLAGGRLIYIGAGTSGRLGVLDASECPPTFGIPHGVVIGLIAGGPAALVTSVEGAEDDEGLGISDLQAQNLSANDMVIGLAASGRTPYAIGALRYARQLGCRTAAISCNPHSPLALEAEIAISPLVGPEALTGSTRLKSGTAQKLVLNMISTGAMIKIGKVYQNLMVDMRASNVKLVDRARRMVCEATGCEVAQAESALQQAQYEVKTAILMILTDLTAEQAGQRLAMHGGFLRAALQGHSQQPQAHK.

The SIS domain occupies 55 to 218 (AAATLLAGGR…STGAMIKIGK (164 aa)). The active-site Proton donor is glutamate 83. Glutamate 114 is an active-site residue.

Belongs to the GCKR-like family. MurNAc-6-P etherase subfamily. In terms of assembly, homodimer.

The enzyme catalyses N-acetyl-D-muramate 6-phosphate + H2O = N-acetyl-D-glucosamine 6-phosphate + (R)-lactate. It participates in amino-sugar metabolism; 1,6-anhydro-N-acetylmuramate degradation. The protein operates within amino-sugar metabolism; N-acetylmuramate degradation. It functions in the pathway cell wall biogenesis; peptidoglycan recycling. Specifically catalyzes the cleavage of the D-lactyl ether substituent of MurNAc 6-phosphate, producing GlcNAc 6-phosphate and D-lactate. Together with AnmK, is also required for the utilization of anhydro-N-acetylmuramic acid (anhMurNAc) either imported from the medium or derived from its own cell wall murein, and thus plays a role in cell wall recycling. The polypeptide is N-acetylmuramic acid 6-phosphate etherase (Erwinia tasmaniensis (strain DSM 17950 / CFBP 7177 / CIP 109463 / NCPPB 4357 / Et1/99)).